The primary structure comprises 475 residues: Exodeoxyribonuclease I (475 aa).

The Exonuclease domain maps to 13–192 (FHDYETFGTH…AMADVYATIA (180 aa)). Mg(2+) is bound by residues Asp-15 and Glu-17. The substrate site is built by Glu-17 and Arg-165. Asp-186 serves as a coordination point for Mg(2+). In terms of domain architecture, ExoI SH3-like spans 202-355 (PRLFDYLFTH…KVVAIFAEAE (154 aa)). The 118-residue stretch at 358 to 475 (TPSDNVDAQL…ALWQYAEEIV (118 aa)) folds into the ExoI C-terminal domain.

Monomer. Interacts with ssb (via C-terminus); this interaction stimulates the exonuclease activity by recruiting the enzyme to its substrate. Mg(2+) serves as cofactor.

The catalysed reaction is Exonucleolytic cleavage in the 3'- to 5'-direction to yield nucleoside 5'-phosphates.. Inhibited by 10 mM EDTA. In terms of biological role, degrades single-stranded DNA (ssDNA) in a highly processive manner. Also functions as a DNA deoxyribophosphodiesterase that releases deoxyribose-phosphate moieties following the cleavage of DNA at an apurinic/apyrimidinic (AP) site by either an AP endonuclease or AP lyase. This chain is Exodeoxyribonuclease I (sbcB), found in Escherichia coli (strain K12).